The sequence spans 443 residues: Chorionicgonadotropic hormone-like protein (443 aa).

Positions 263–286 (RCAGRPCPRRHRRPCNASKSHRPM) are enriched in basic residues. The disordered stretch occupies residues 263-292 (RCAGRPCPRRHRRPCNASKSHRPMRMQQRD).

It to mammalian CGHB.

Its subcellular location is the secreted. It localises to the cell wall. Functionally, cell wall protein that resembles the beta subunit of human chorionic gonadotropin. Stimulates growth and change in morphology. The protein is Chorionicgonadotropic hormone-like protein (xcg) of Stenotrophomonas maltophilia (Pseudomonas maltophilia).